The chain runs to 729 residues: Neurochondrin (729 aa).

N-acetylserine is present on serine 2. Serine 2 bears the Phosphoserine mark. Residue serine 2 is modified to N-acetylalanine. Residues cysteine 3 and cysteine 4 are each lipidated (S-palmitoyl cysteine). An Asymmetric dimethylarginine modification is found at arginine 75. Phosphoserine is present on serine 448.

Belongs to the neurochondrin family. Interacts with MCHR1. Interacts with SEMA4C. Interacts with DIAPH1 (via FH3 domain). Interacts with GRM5. Post-translationally, palmitoylated. Palmitoylation by ZDHHC1, ZDHHC3 and ZDHHC11 regulates the association of NCDN with endosome membranes. May also be palmitoylated by ZDHHC7. Abundantly expressed in whole adult brain and in all individual brain regions examined, including spinal cord. Weakly expressed in ovary, testis, fetal brain and small intestine.

The protein localises to the cytoplasm. It localises to the cytosol. Its subcellular location is the endosome membrane. The protein resides in the cell projection. It is found in the dendrite. The protein localises to the postsynapse. In terms of biological role, probably involved in signal transduction in the nervous system, via increasing cell surface localization of GRM5/mGluR5 and positively regulating its signaling. Required for the spatial learning process. Acts as a negative regulator of Ca(2+)-calmodulin-dependent protein kinase 2 (CaMK2) phosphorylation. May play a role in modulating melanin-concentrating hormone-mediated functions via its interaction with MCHR1 that interferes with G protein-coupled signal transduction. May be involved in bone metabolism. May also be involved in neurite outgrowth. This is Neurochondrin from Homo sapiens (Human).